We begin with the raw amino-acid sequence, 501 residues long: UDP-N-acetylmuramate--L-alanine ligase (501 aa).

An ATP-binding site is contributed by 130 to 136 (GTHGKTS).

The protein belongs to the MurCDEF family.

The protein localises to the cytoplasm. The catalysed reaction is UDP-N-acetyl-alpha-D-muramate + L-alanine + ATP = UDP-N-acetyl-alpha-D-muramoyl-L-alanine + ADP + phosphate + H(+). The protein operates within cell wall biogenesis; peptidoglycan biosynthesis. Functionally, cell wall formation. The polypeptide is UDP-N-acetylmuramate--L-alanine ligase (Nocardia farcinica (strain IFM 10152)).